Consider the following 365-residue polypeptide: uncharacterized protein (365 aa).

Disordered stretches follow at residues 119 to 157, 216 to 298, and 313 to 365; these read ERSR…QQES, RPPG…DISH, and SHHH…LSVG. Residues 326-340 show a composition bias toward basic and acidic residues; sequence SDPRIESRDLPERPQ.

This is an uncharacterized protein from Homo sapiens (Human).